A 362-amino-acid polypeptide reads, in one-letter code: Molybdenum import ATP-binding protein ModC (362 aa).

One can recognise an ABC transporter domain in the interval 2 to 236 (ASPIEVRLHM…LDLPLAMGGD (235 aa)). 34 to 41 (GPSGSGKT) contributes to the ATP binding site. The 66-residue stretch at 297–362 (QSSILNRLPV…AQIKAVAVLA (66 aa)) folds into the Mop domain.

The protein belongs to the ABC transporter superfamily. Molybdate importer (TC 3.A.1.8) family. As to quaternary structure, the complex is composed of two ATP-binding proteins (ModC), two transmembrane proteins (ModB) and a solute-binding protein (ModA).

Its subcellular location is the cell inner membrane. The catalysed reaction is molybdate(out) + ATP + H2O = molybdate(in) + ADP + phosphate + H(+). Its function is as follows. Part of the ABC transporter complex ModABC involved in molybdenum import. Responsible for energy coupling to the transport system. This is Molybdenum import ATP-binding protein ModC from Pseudomonas savastanoi pv. phaseolicola (strain 1448A / Race 6) (Pseudomonas syringae pv. phaseolicola (strain 1448A / Race 6)).